A 185-amino-acid polypeptide reads, in one-letter code: Photosystem I assembly protein Ycf4 (185 aa).

A run of 2 helical transmembrane segments spans residues Tyr24–Ser44 and Ile66–Val86.

The protein belongs to the Ycf4 family.

Its subcellular location is the cellular thylakoid membrane. Its function is as follows. Seems to be required for the assembly of the photosystem I complex. The sequence is that of Photosystem I assembly protein Ycf4 from Prochlorococcus marinus (strain AS9601).